The sequence spans 198 residues: Holliday junction branch migration complex subunit RuvA (198 aa).

A domain I region spans residues 1–63 (MYDYIKGQLT…EDAHLLFGFH (63 aa)). The domain II stretch occupies residues 64 to 142 (TEDEKDVFLK…EAPQETGNTK (79 aa)). The interval 143–147 (ARSNK) is flexible linker. Residues 148–198 (AGNTQLDEAIEALLALGYKAAELKKIRAFFEGTSETAEQYIKSALKLLMKG) form a domain III region.

This sequence belongs to the RuvA family. Homotetramer. Forms an RuvA(8)-RuvB(12)-Holliday junction (HJ) complex. HJ DNA is sandwiched between 2 RuvA tetramers; dsDNA enters through RuvA and exits via RuvB. An RuvB hexamer assembles on each DNA strand where it exits the tetramer. Each RuvB hexamer is contacted by two RuvA subunits (via domain III) on 2 adjacent RuvB subunits; this complex drives branch migration. In the full resolvosome a probable DNA-RuvA(4)-RuvB(12)-RuvC(2) complex forms which resolves the HJ.

It localises to the cytoplasm. In terms of biological role, the RuvA-RuvB-RuvC complex processes Holliday junction (HJ) DNA during genetic recombination and DNA repair, while the RuvA-RuvB complex plays an important role in the rescue of blocked DNA replication forks via replication fork reversal (RFR). RuvA specifically binds to HJ cruciform DNA, conferring on it an open structure. The RuvB hexamer acts as an ATP-dependent pump, pulling dsDNA into and through the RuvAB complex. HJ branch migration allows RuvC to scan DNA until it finds its consensus sequence, where it cleaves and resolves the cruciform DNA. The protein is Holliday junction branch migration complex subunit RuvA of Streptococcus pyogenes serotype M28 (strain MGAS6180).